The following is a 290-amino-acid chain: Elongation factor Ts (290 aa).

The segment at 81 to 84 is involved in Mg(2+) ion dislocation from EF-Tu; that stretch reads TDFV.

The protein belongs to the EF-Ts family.

The protein resides in the cytoplasm. Its function is as follows. Associates with the EF-Tu.GDP complex and induces the exchange of GDP to GTP. It remains bound to the aminoacyl-tRNA.EF-Tu.GTP complex up to the GTP hydrolysis stage on the ribosome. The polypeptide is Elongation factor Ts (Vesicomyosocius okutanii subsp. Calyptogena okutanii (strain HA)).